Consider the following 337-residue polypeptide: Biotin synthase 1 (337 aa).

The disordered stretch occupies residues 1–23; sequence MSSVLTQPLAFHPPRPAVQPREH. A Radical SAM core domain is found at 57-284; sequence TRVEFATLLS…TARVRLSAGR (228 aa). Residues Cys-72, Cys-76, and Cys-79 each coordinate [4Fe-4S] cluster. The [2Fe-2S] cluster site is built by Cys-116, Cys-147, Cys-207, and Arg-279.

The protein belongs to the radical SAM superfamily. Biotin synthase family. In terms of assembly, homodimer. [4Fe-4S] cluster serves as cofactor. [2Fe-2S] cluster is required as a cofactor.

It carries out the reaction (4R,5S)-dethiobiotin + (sulfur carrier)-SH + 2 reduced [2Fe-2S]-[ferredoxin] + 2 S-adenosyl-L-methionine = (sulfur carrier)-H + biotin + 2 5'-deoxyadenosine + 2 L-methionine + 2 oxidized [2Fe-2S]-[ferredoxin]. Its pathway is cofactor biosynthesis; biotin biosynthesis; biotin from 7,8-diaminononanoate: step 2/2. In terms of biological role, catalyzes the conversion of dethiobiotin (DTB) to biotin by the insertion of a sulfur atom into dethiobiotin via a radical-based mechanism. In Polaromonas sp. (strain JS666 / ATCC BAA-500), this protein is Biotin synthase 1.